A 51-amino-acid polypeptide reads, in one-letter code: Large ribosomal subunit protein eL39 (51 aa).

The protein belongs to the eukaryotic ribosomal protein eL39 family.

This is Large ribosomal subunit protein eL39 from Staphylothermus marinus (strain ATCC 43588 / DSM 3639 / JCM 9404 / F1).